The sequence spans 316 residues: Taste receptor type 2 member 109 (316 aa).

Residues 1-14 (MEHLLKRTFDITEN) lie on the Extracellular side of the membrane. A helical membrane pass occupies residues 15-35 (ILLIILFIELIIGLIGNGFTA). Over 36 to 62 (LVHCMDWVKRKKMSLVNKILTALATSR) the chain is Cytoplasmic. The helical transmembrane segment at 63–83 (IFLLWFMLVGFPISSLYPYLV) threads the bilayer. Residues 84–94 (TTRLMIQFTST) are Extracellular-facing. A helical membrane pass occupies residues 95–115 (LWTIANHISVWFATCLSVFYF). The Cytoplasmic portion of the chain corresponds to 116 to 135 (LKIANFSNSPFLYLKRRVEK). A helical transmembrane segment spans residues 136–156 (VVSVTLLVSLVLLFLNILLLN). Residues 157-191 (LEINMCINEYHQINISYIFISYYHLSCQIQVLGSH) are Extracellular-facing. An N-linked (GlcNAc...) asparagine glycan is attached at asparagine 170. A helical transmembrane segment spans residues 192–212 (IIFLSVPVVLSLSTFLLLIFS). Residues 213–241 (LWTLHKRMQQHVQGGRDARTTAHFKALQA) lie on the Cytoplasmic side of the membrane. The helical transmembrane segment at 242-262 (VIAFLLLYSIFILSLLLQFWI) threads the bilayer. At 263–270 (HGLRKKPP) the chain is on the extracellular side. Residues 271–291 (FIAFCQVVDTAFPSFHSYVLI) traverse the membrane as a helical segment. Over 292-316 (LRDRKLRHASLSVLSWLKCRPNYVK) the chain is Cytoplasmic.

Belongs to the G-protein coupled receptor T2R family.

Its subcellular location is the membrane. Its function is as follows. Putative taste receptor which may play a role in the perception of bitterness. This Mus musculus (Mouse) protein is Taste receptor type 2 member 109.